A 333-amino-acid chain; its full sequence is CMP-N-acetylneuraminate-beta-galactosamide-alpha-2,3-sialyltransferase 4 (333 aa).

The Cytoplasmic portion of the chain corresponds to 1–8 (MTSKSHWK). Residues 9-26 (LLALALVLVVVMVWYSIS) form a helical; Signal-anchor for type II membrane protein membrane-spanning segment. At 27–333 (REDRYIEFFY…MGAVKNLTYF (307 aa)) the chain is on the lumenal side. N61, N131, N310, and N329 each carry an N-linked (GlcNAc...) asparagine glycan. A disulfide bridge connects residues C120 and C273.

The protein belongs to the glycosyltransferase 29 family.

It is found in the golgi apparatus. It localises to the golgi stack membrane. The catalysed reaction is a beta-D-galactosyl-(1-&gt;3)-N-acetyl-beta-D-galactosaminyl derivative + CMP-N-acetyl-beta-neuraminate = an N-acetyl-alpha-neuraminyl-(2-&gt;3)-beta-D-galactosyl-(1-&gt;3)-N-acetyl-beta-D-galactosaminyl derivative + CMP + H(+). It carries out the reaction a beta-D-galactosyl-(1-&gt;3)-N-acetyl-alpha-D-galactosaminyl derivative + CMP-N-acetyl-beta-neuraminate = an N-acetyl-alpha-neuraminyl-(2-&gt;3)-beta-D-galactosyl-(1-&gt;3)-N-acetyl-alpha-D-galactosaminyl derivative + CMP + H(+). It catalyses the reaction a beta-D-galactosyl-(1-&gt;4)-N-acetyl-beta-D-glucosaminyl derivative + CMP-N-acetyl-beta-neuraminate = an N-acetyl-alpha-neuraminyl-(2-&gt;3)-beta-D-galactosyl-(1-&gt;4)-N-acetyl-beta-D-glucosaminyl derivative + CMP + H(+). The enzyme catalyses a ganglioside GM1 (d18:1(4E)) + CMP-N-acetyl-beta-neuraminate = a ganglioside GD1a (d18:1(4E)) + CMP + H(+). The catalysed reaction is a ganglioside GA1 (d18:1(4E)) + CMP-N-acetyl-beta-neuraminate = a ganglioside GM1b (d18:1(4E)) + CMP + H(+). It carries out the reaction a ganglioside GT1c (d18:1(4E)) + CMP-N-acetyl-beta-neuraminate = a ganglioside GQ1c (d18:1(4E)) + CMP + H(+). It catalyses the reaction a neolactoside nLc4Cer + CMP-N-acetyl-beta-neuraminate = a neolactoside IV(3)-alpha-NeuAc-nLc4Cer + CMP + H(+). The enzyme catalyses a neolactoside nLc4Cer(d18:1(4E)) + CMP-N-acetyl-beta-neuraminate = a neolactoside IV(3)-alpha-NeuAc-nLc4Cer(d18:1(4E)) + CMP + H(+). The protein operates within protein modification; protein glycosylation. It participates in glycolipid biosynthesis. A beta-galactoside alpha2-3 sialyltransferase involved in terminal sialylation of glycoproteins and glycolipids. Catalyzes the transfer of sialic acid (N-acetyl-neuraminic acid; Neu5Ac) from the nucleotide sugar donor CMP-Neu5Ac onto acceptor Galbeta-(1-&gt;3)-GalNAc- and Galbeta-(1-&gt;4)-GlcNAc-terminated glycoconjugates through an alpha2-3 linkage. Plays a major role in hemostasis. Responsible for sialylation of plasma VWF/von Willebrand factor, preventing its recognition by asialoglycoprotein receptors (ASGPR) and subsequent clearance. Regulates ASGPR-mediated clearance of platelets. Participates in the biosynthesis of the sialyl Lewis X epitopes, both on O- and N-glycans, which are recognized by SELE/E-selectin, SELP/P-selectin and SELL/L-selectin. Essential for selectin-mediated rolling and adhesion of leukocytes during extravasation. Contributes to adhesion and transendothelial migration of neutrophils likely through terminal sialylation of CXCR2. In glycosphingolipid biosynthesis, sialylates GM1 and GA1 gangliosides to form GD1a and GM1b, respectively. Metabolizes brain c-series ganglioside GT1c forming GQ1c. Synthesizes ganglioside LM1 (IV3Neu5Ac-nLc4Cer), a major structural component of peripheral nerve myelin. The protein is CMP-N-acetylneuraminate-beta-galactosamide-alpha-2,3-sialyltransferase 4 (St3gal4) of Rattus norvegicus (Rat).